Here is a 269-residue protein sequence, read N- to C-terminus: Interleukin-1 beta (269 aa).

A propeptide spans 1 to 116 (removed in mature form; by CASP1); that stretch reads MAEVPELASE…TWDNEAYVHD (116 aa). The short motif at 228-241 is the Involved in interaction with TMED10 C-terminus element; that stretch reads FESAQFPNWYISTS.

It belongs to the IL-1 family. In terms of assembly, monomer. In its precursor form, weakly interacts with full-length MEFV; the mature cytokine does not interact at all. Interacts with integrins ITGAV:ITGBV and ITGA5:ITGB1; integrin-binding is required for IL1B signaling. Interacts with cargo receptor TMED10; the interaction is direct and is required for the secretion of IL1B mature form. Interacts with HSP90AB1; the interaction facilitates cargo translocation into the ERGIC. Interacts with HSP90B1; the interaction facilitates cargo translocation into the ERGIC. In terms of processing, activation of the IL1B precursor involves a CASP1-catalyzed proteolytic cleavage. Processing and secretion are temporarily associated. (Microbial infection) Cleavage by S.pyogenes cysteine protease SpeB promotes its activation independently of CASP1. Expressed in activated monocytes/macrophages (at protein level).

It localises to the cytoplasm. The protein resides in the cytosol. Its subcellular location is the secreted. It is found in the lysosome. The protein localises to the extracellular exosome. Its activity is regulated as follows. (Microbial infection) Cleavage by S.pyogenes cysteine protease SpeB promotes its activation independently of CASP1. SpeB-mediated maturation of IL1B plays a dual role depending on infection site: while IL1B inflammatory response prevents bacterial growth during invasive skin infections, it promotes streptococcal infection of the nasopharynx by disrupting colonization resistance mediated by the microbiota. Functionally, potent pro-inflammatory cytokine. Initially discovered as the major endogenous pyrogen, induces prostaglandin synthesis, neutrophil influx and activation, T-cell activation and cytokine production, B-cell activation and antibody production, and fibroblast proliferation and collagen production. Promotes Th17 differentiation of T-cells. Synergizes with IL12/interleukin-12 to induce IFNG synthesis from T-helper 1 (Th1) cells. Plays a role in angiogenesis by inducing VEGF production synergistically with TNF and IL6. Involved in transduction of inflammation downstream of pyroptosis: its mature form is specifically released in the extracellular milieu by passing through the gasdermin-D (GSDMD) pore. Acts as a sensor of S.pyogenes infection in skin: cleaved and activated by pyogenes SpeB protease, leading to an inflammatory response that prevents bacterial growth during invasive skin infection. The chain is Interleukin-1 beta from Homo sapiens (Human).